Reading from the N-terminus, the 459-residue chain is Argininosuccinate lyase (459 aa).

This sequence belongs to the lyase 1 family. Argininosuccinate lyase subfamily.

Its subcellular location is the cytoplasm. The enzyme catalyses 2-(N(omega)-L-arginino)succinate = fumarate + L-arginine. The protein operates within amino-acid biosynthesis; L-arginine biosynthesis; L-arginine from L-ornithine and carbamoyl phosphate: step 3/3. This Prochlorococcus marinus (strain MIT 9515) protein is Argininosuccinate lyase.